The sequence spans 86 residues: Small ribosomal subunit protein bS20 (86 aa).

It belongs to the bacterial ribosomal protein bS20 family.

Functionally, binds directly to 16S ribosomal RNA. In Pseudarthrobacter chlorophenolicus (strain ATCC 700700 / DSM 12829 / CIP 107037 / JCM 12360 / KCTC 9906 / NCIMB 13794 / A6) (Arthrobacter chlorophenolicus), this protein is Small ribosomal subunit protein bS20.